A 61-amino-acid polypeptide reads, in one-letter code: Prophage outer membrane lipoprotein RzoR (61 aa).

The N-terminal stretch at 1–19 is a signal peptide; that stretch reads MRKLKMMLCVMMLPLVVVG. Cysteine 20 carries the N-palmitoyl cysteine lipid modification. Residue cysteine 20 is the site of S-diacylglycerol cysteine attachment.

This sequence belongs to the lambdalikevirus o-spanin family. Homodimer; disulfide-linked. Interacts (via C-terminus) with RZ (via C-terminus). Part of the spanin complex which spans the entire periplasmic space. The spanin complex is composed of spanin, inner membrane subunit and spanin, outer membrane subunit.

The protein resides in the cell outer membrane. Component of the spanin complex that disrupts the outer membrane and causes cell lysis during virus exit. The spanin complex conducts the final step in cell lysis by disrupting the outer membrane after holin and endolysin action have permeabilized the inner membrane and degraded the host peptidoglycans. In Escherichia coli (strain K12), this protein is Prophage outer membrane lipoprotein RzoR (rzoR).